Reading from the N-terminus, the 183-residue chain is Ribosome-recycling factor (183 aa).

Residues 134–156 form a disordered region; the sequence is DANDELKKHQSEMSQDEVKGHQD.

It belongs to the RRF family.

The protein localises to the cytoplasm. Functionally, responsible for the release of ribosomes from messenger RNA at the termination of protein biosynthesis. May increase the efficiency of translation by recycling ribosomes from one round of translation to another. The chain is Ribosome-recycling factor from Leptospira biflexa serovar Patoc (strain Patoc 1 / Ames).